The primary structure comprises 333 residues: MRLKVGLLGGGSWGTTVAAVVSRNAPIQLWARDAETVEGINRDHENRKYLPGITLPPALGATSDMAEVVAGADVLVMAVPSHSFRSVLEEARDHIRPWVPVISLTKGLELASGKRMTELIEDVLPGHPVGVLTGPNLAREIMAGQAAASVLSMADEIVVRALQPLFHSGLFRVYTNTDLLGCELGGVLKNIIAIAVGMGDGLGAGDNTRAGLMTRGLAEITRLGVAMGGRPETFAGLTGMGDLIATCTSPLSRNRHVGVELGKGRPIDAIIAGMNMVAEGVKSAPTVMALADRHGIAMPIARDVFDVTQGKRTAMDVFRGLLKSSVGDEAHPG.

Positions 12, 13, 32, and 106 each coordinate NADPH. Residues lysine 106 and glycine 134 each coordinate sn-glycerol 3-phosphate. Alanine 138 is a binding site for NADPH. Positions 189, 242, 252, 253, and 254 each coordinate sn-glycerol 3-phosphate. Lysine 189 serves as the catalytic Proton acceptor. Residue arginine 253 coordinates NADPH. NADPH contacts are provided by valine 277 and glutamate 279.

The protein belongs to the NAD-dependent glycerol-3-phosphate dehydrogenase family.

Its subcellular location is the cytoplasm. The enzyme catalyses sn-glycerol 3-phosphate + NAD(+) = dihydroxyacetone phosphate + NADH + H(+). It catalyses the reaction sn-glycerol 3-phosphate + NADP(+) = dihydroxyacetone phosphate + NADPH + H(+). It participates in membrane lipid metabolism; glycerophospholipid metabolism. Functionally, catalyzes the reduction of the glycolytic intermediate dihydroxyacetone phosphate (DHAP) to sn-glycerol 3-phosphate (G3P), the key precursor for phospholipid synthesis. In Sphingopyxis alaskensis (strain DSM 13593 / LMG 18877 / RB2256) (Sphingomonas alaskensis), this protein is Glycerol-3-phosphate dehydrogenase [NAD(P)+] 2.